The primary structure comprises 520 residues: Zinc finger and BTB domain-containing protein 18 (520 aa).

A BTB domain is found at 24–91 (CDCTVLVGDA…MYEGILQFKG (68 aa)). Residues 121–140 (ATTDSTKKEEDTSSFSDKVE) form a disordered region. 4 consecutive C2H2-type zinc fingers follow at residues 368–390 (FMCPLCNKVFPSPHILQIHLSTH), 408–430 (PTCSLCGKTFSCMYTLKRHERTH), 436–458 (YTCTQCGKSFQYSHNLSRHAVVH), and 464–487 (HACKWCERRFTQSGDLYRHIRKFH).

Belongs to the krueppel C2H2-type zinc-finger protein family. ZBTB18 subfamily.

The protein localises to the nucleus. Transcriptional repressor that plays a role in various developmental processes. Specifically binds the consensus DNA sequence 5'-[AC]ACATCTG[GT][AC]-3' which contains the E box core, and acts by recruiting chromatin remodeling multiprotein complexes. The protein is Zinc finger and BTB domain-containing protein 18 (zbtb18) of Xenopus laevis (African clawed frog).